Consider the following 197-residue polypeptide: HTH-type transcriptional repressor BdcR (197 aa).

Residues 15–75 (RFAPEQAISA…RVLNEYVGTE (61 aa)) form the HTH tetR-type domain. A DNA-binding region (H-T-H motif) is located at residues 38–57 (SVAEVTDYLGINPPSLYAAF).

In terms of biological role, negatively regulates expression of bdcA. In Escherichia coli (strain K12), this protein is HTH-type transcriptional repressor BdcR (bdcR).